A 56-amino-acid chain; its full sequence is Small ribosomal subunit protein uS14 (56 aa).

Zn(2+) contacts are provided by cysteine 21, cysteine 24, cysteine 39, and cysteine 42.

This sequence belongs to the universal ribosomal protein uS14 family. It depends on Zn(2+) as a cofactor.

This is Small ribosomal subunit protein uS14 (RPS29) from Candida glabrata (strain ATCC 2001 / BCRC 20586 / JCM 3761 / NBRC 0622 / NRRL Y-65 / CBS 138) (Yeast).